Here is a 148-residue protein sequence, read N- to C-terminus: uncharacterized protein (148 aa).

The tract at residues 122 to 148 (HNWRKRMGTRRGRHEQSPTSRPRKGPD) is disordered. The segment covering 123–134 (NWRKRMGTRRGR) has biased composition (basic residues).

This is an uncharacterized protein from Homo sapiens (Human).